A 67-amino-acid polypeptide reads, in one-letter code: Brevinin-1CDYa (67 aa).

Residues 1 to 22 (MFTLKKSLLLIFFLGTINLSLC) form the signal peptide. Residues 23–45 (EEERNADEEERRDDLEERDVEVE) constitute a propeptide that is removed on maturation. A disulfide bridge connects residues cysteine 61 and cysteine 67.

It belongs to the frog skin active peptide (FSAP) family. Brevinin subfamily. Expressed by the skin glands.

Its subcellular location is the secreted. Antimicrobial peptide. Has low activity against the Gram-positive bacterium S.aureus (MIC=12.5 uM) and the Gram-negative bacterium E.coli (MIC=25 uM). Has weak hemolytic activity against human erythrocytes. This is Brevinin-1CDYa from Rana dybowskii (Dybovsky's frog).